The sequence spans 60 residues: Pepsin A (60 aa).

A propeptide spans 1 to 45 (FIIKVPLVKKKSLRKNLKEHGLLKDFLKKHSPNPASKYFPQEAAV) (activation peptide).

It belongs to the peptidase A1 family.

The protein localises to the secreted. The catalysed reaction is Preferential cleavage: hydrophobic, preferably aromatic, residues in P1 and P1' positions. Cleaves 1-Phe-|-Val-2, 4-Gln-|-His-5, 13-Glu-|-Ala-14, 14-Ala-|-Leu-15, 15-Leu-|-Tyr-16, 16-Tyr-|-Leu-17, 23-Gly-|-Phe-24, 24-Phe-|-Phe-25 and 25-Phe-|-Tyr-26 bonds in the B chain of insulin.. Shows particularly broad specificity; although bonds involving phenylalanine and leucine are preferred, many others are also cleaved to some extent. This chain is Pepsin A (PGA), found in Ursus thibetanus (Asiatic black bear).